The chain runs to 343 residues: Protein RecA (343 aa).

66–73 (GPESSGKT) is an ATP binding site.

Belongs to the RecA family.

The protein resides in the cytoplasm. Can catalyze the hydrolysis of ATP in the presence of single-stranded DNA, the ATP-dependent uptake of single-stranded DNA by duplex DNA, and the ATP-dependent hybridization of homologous single-stranded DNAs. It interacts with LexA causing its activation and leading to its autocatalytic cleavage. The protein is Protein RecA of Rickettsia massiliae (strain Mtu5).